Here is a 366-residue protein sequence, read N- to C-terminus: Ribosomal RNA large subunit methyltransferase M (366 aa).

S-adenosyl-L-methionine is bound by residues S188, 221-224, D240, D260, and D277; that span reads CPGG. Catalysis depends on K306, which acts as the Proton acceptor.

It belongs to the class I-like SAM-binding methyltransferase superfamily. RNA methyltransferase RlmE family. RlmM subfamily. In terms of assembly, monomer.

The protein resides in the cytoplasm. It carries out the reaction cytidine(2498) in 23S rRNA + S-adenosyl-L-methionine = 2'-O-methylcytidine(2498) in 23S rRNA + S-adenosyl-L-homocysteine + H(+). Its function is as follows. Catalyzes the 2'-O-methylation at nucleotide C2498 in 23S rRNA. In Shigella dysenteriae serotype 1 (strain Sd197), this protein is Ribosomal RNA large subunit methyltransferase M.